A 154-amino-acid chain; its full sequence is Protein X (154 aa).

The segment at 68-117 is mitochondrial targeting sequence; sequence PCALRFTSARSMETTVNAHQVLPKVLHKRTLGLSAMSTTDLEAYFKDCLF.

Belongs to the orthohepadnavirus protein X family. As to quaternary structure, may form homodimer. May interact with host CEBPA, CFLAR, CREB1, DDB1, E4F1, HBXIP, HSPD1/HSP60, NFKBIA, POLR2E and SMAD4. Interacts with host SMC5-SMC6 complex and induces its degradation. Interacts with host TRPC4AP; leading to prevent ubiquitination of TRPC4AP. Interacts with host PLSCR1; this interaction promotes ubiquitination and degradation of HBx and impairs HBx-mediated cell proliferation. In terms of processing, a fraction may be phosphorylated in insect cells and HepG2 cells, a human hepatoblastoma cell line. Phosphorylated in vitro by host protein kinase C or mitogen-activated protein kinase. N-acetylated in insect cells.

Its subcellular location is the host cytoplasm. It localises to the host nucleus. It is found in the host mitochondrion. Functionally, multifunctional protein that plays a role in silencing host antiviral defenses and promoting viral transcription. Does not seem to be essential for HBV infection. May be directly involved in development of cirrhosis and liver cancer (hepatocellular carcinoma). Most of cytosolic activities involve modulation of cytosolic calcium. The effect on apoptosis is controversial depending on the cell types in which the studies have been conducted. May induce apoptosis by localizing in mitochondria and causing loss of mitochondrial membrane potential. May also modulate apoptosis by binding host CFLAR, a key regulator of the death-inducing signaling complex (DISC). Promotes viral transcription by using the host E3 ubiquitin ligase DDB1 to target the SMC5-SMC6 complex to proteasomal degradation. This host complex would otherwise bind to viral episomal DNA, and prevents its transcription. Moderately stimulates transcription of many different viral and cellular transcription elements. Promoters and enhancers stimulated by HBx contain DNA binding sites for NF-kappa-B, AP-1, AP-2, c-EBP, ATF/CREB, or the calcium-activated factor NF-AT. The protein is Protein X of Homo sapiens (Human).